The sequence spans 300 residues: Ubiquitin thioesterase otu2 (300 aa).

Disordered stretches follow at residues 23–73 (RKQL…QQED) and 89–141 (TAEK…SEKM). The segment covering 48-61 (LSQKHATERQKLDK) has biased composition (basic and acidic residues). Over residues 62–71 (GDEETNETQQ) the composition is skewed to acidic residues. A compositionally biased stretch (polar residues) spans 89 to 109 (TAEKSSVQSSLNTKENTPQQP). Positions 115 to 141 (RQKERLERRKAEMKKMSEQAELESEKM) are enriched in basic and acidic residues. In terms of domain architecture, OTU spans 161-298 (LVAVDIPADG…GAHYNSLLYR (138 aa)).

It localises to the cytoplasm. It catalyses the reaction Thiol-dependent hydrolysis of ester, thioester, amide, peptide and isopeptide bonds formed by the C-terminal Gly of ubiquitin (a 76-residue protein attached to proteins as an intracellular targeting signal).. Functionally, hydrolase that can remove conjugated ubiquitin from proteins and may therefore play an important regulatory role at the level of protein turnover by preventing degradation. The sequence is that of Ubiquitin thioesterase otu2 (otu2) from Schizosaccharomyces pombe (strain 972 / ATCC 24843) (Fission yeast).